A 1025-amino-acid chain; its full sequence is Serine/threonine-protein kinase TAO2 (1025 aa).

A Protein kinase domain is found at 28–281 (FADLREIGHG…SDMLLKHRFL (254 aa)). Residues 34–42 (IGHGSFGAV) and Lys57 contribute to the ATP site. The active-site Proton acceptor is the Asp151. The segment covering 349 to 373 (ESSQSVPSMSISASSQSSSVNSLAD) has biased composition (low complexity). The tract at residues 349 to 377 (ESSQSVPSMSISASSQSSSVNSLADASDD) is disordered. Coiled coils occupy residues 457 to 650 (SALR…ECAM) and 755 to 876 (ILKR…EIEA). Disordered regions lie at residues 899–930 (FNQG…QNTG) and 945–1025 (SASW…LSYS). The span at 905–914 (APPPGWPSRP) shows a compositional bias: pro residues. A compositionally biased stretch (low complexity) spans 947–986 (SWGLHPPGSSSSLSALPSSSSSSSSSPSSSSGGRPGLLLL). The segment covering 1007 to 1025 (SRSTSVTSQLSNGSHLSYS) has biased composition (polar residues).

Belongs to the protein kinase superfamily. STE Ser/Thr protein kinase family. STE20 subfamily. It depends on Mg(2+) as a cofactor.

It catalyses the reaction L-seryl-[protein] + ATP = O-phospho-L-seryl-[protein] + ADP + H(+). It carries out the reaction L-threonyl-[protein] + ATP = O-phospho-L-threonyl-[protein] + ADP + H(+). In terms of biological role, serine/threonine-protein kinase involved in different processes such as apoptotic morphological changes, MAPK8/JNK and MAPK14/p38 MAPK signaling pathway. Its function is as follows. Activates the JNK MAP kinase pathway. The sequence is that of Serine/threonine-protein kinase TAO2 (taok2) from Xenopus laevis (African clawed frog).